We begin with the raw amino-acid sequence, 498 residues long: Glycerol kinase (498 aa).

An ADP-binding site is contributed by Thr-14. Positions 14, 15, and 16 each coordinate ATP. Thr-14 contributes to the sn-glycerol 3-phosphate binding site. Arg-18 lines the ADP pocket. Residues Arg-84, Glu-85, Tyr-136, and Asp-245 each contribute to the sn-glycerol 3-phosphate site. Arg-84, Glu-85, Tyr-136, Asp-245, and Gln-246 together coordinate glycerol. ADP contacts are provided by Thr-267 and Gly-310. Residues Thr-267, Gly-310, Gln-314, and Gly-410 each contribute to the ATP site. Gly-410 and Asn-414 together coordinate ADP.

The protein belongs to the FGGY kinase family.

It catalyses the reaction glycerol + ATP = sn-glycerol 3-phosphate + ADP + H(+). It participates in polyol metabolism; glycerol degradation via glycerol kinase pathway; sn-glycerol 3-phosphate from glycerol: step 1/1. With respect to regulation, inhibited by fructose 1,6-bisphosphate (FBP). Key enzyme in the regulation of glycerol uptake and metabolism. Catalyzes the phosphorylation of glycerol to yield sn-glycerol 3-phosphate. This chain is Glycerol kinase, found in Rhodospirillum centenum (strain ATCC 51521 / SW).